We begin with the raw amino-acid sequence, 3005 residues long: Highly reducing polyketide synthase AFT9-1 (3005 aa).

A Ketosynthase family 3 (KS3) domain is found at 1 to 337 (MDPQQRLLLE…GTNAHAILER (337 aa)). Active-site for beta-ketoacyl synthase activity residues include C87, H222, and H260. A malonyl-CoA:ACP transacylase (MAT) domain region spans residues 437–751 (VFTGQGAQWP…SYMSALVRGS (315 aa)). Positions 821–936 (HDLLGLKMTD…GSVEVKYAAA (116 aa)) are N-terminal hotdog fold. The segment at 821-1114 (HDLLGLKMTD…SGLELRRLAP (294 aa)) is dehydratase (DH) domain. Residues 821–1118 (HDLLGLKMTD…LRRLAPTGQP (298 aa)) form the PKS/mFAS DH domain. Residue H853 is the Proton acceptor; for dehydratase activity of the active site. Residues 963-1118 (IEKISSQELY…LRRLAPTGQP (156 aa)) form a C-terminal hotdog fold region. D1028 (proton donor; for dehydratase activity) is an active-site residue. The interval 1259–1445 (ADDSSKRCYD…MRKASLNMQL (187 aa)) is methyltransferase (CMet) domain. The segment at 1683–1985 (EFMKMPVFTE…QHHRNESTVL (303 aa)) is enoyl reductase (ER) (ER) domain. Residues 2008–2191 (ATYVVSGGRG…YMSLNVGTIE (184 aa)) form a ketoreductase (KR) domain region. The region spanning 2293–2375 (TRDFEKISQL…SLGAKVASRS (83 aa)) is the Carrier domain. The residue at position 2335 (S2335) is an O-(pantetheine 4'-phosphoryl)serine.

It functions in the pathway mycotoxin biosynthesis. Its function is as follows. Highly reducing polyketide synthase; part of the gene clusters that mediate the biosynthesis of the host-selective toxins (HSTs) AF-toxins responsible for Alternaria black spot of strawberry disease by the strawberry pathotype. AF-toxin I and III are valine derivatives of 2,3-dyhydroxy-isovaleric acid and 2-hydroxy-isovaleric acid respectively, while AF II is an isoleucine derivative of 2-hydroxy-valeric acid. These derivatives are bound to a 9,10-epoxy-8-hydroxy-9-methyl-decatrienoic acid (EDA) moiety. On cellular level, AF-toxins affect plasma membrane of susceptible cells and cause a sudden increase in loss of K(+) after a few minutes of toxin treatment. The aldo-keto reductase AFTS1 catalyzes the conversion of 2-keto-isovaleric acid (2-KIV) to 2-hydroxy-isovaleric acid (2-HIV) by reduction of its ketone to an alcohol. The acyl-CoA ligase AFT1, the hydrolase AFT2 and the enoyl-CoA hydratases AFT3 and AFT6, but also the polyketide synthase AFT9, the acyl-CoA dehydrogenase AFT10, the cytochrome P450 monooxygenase AFT11 and the oxidoreductase AFT12 are all involved in the biosynthesis of the AK-, AF- and ACT-toxin common EDA structural moiety. The exact function of each enzyme, and of additional enzymes identified within the AF-toxin clusters have still to be determined. This Alternaria alternata (Alternaria rot fungus) protein is Highly reducing polyketide synthase AFT9-1.